A 33-amino-acid polypeptide reads, in one-letter code: MPTITIISYFGFLLASIIFTLVLFISLSKIQLI.

Residues 4-24 (ITIISYFGFLLASIIFTLVLF) traverse the membrane as a helical segment.

The protein belongs to the PetL family. The 4 large subunits of the cytochrome b6-f complex are cytochrome b6, subunit IV (17 kDa polypeptide, PetD), cytochrome f and the Rieske protein, while the 4 small subunits are PetG, PetL, PetM and PetN. The complex functions as a dimer.

It localises to the plastid. Its subcellular location is the chloroplast thylakoid membrane. In terms of biological role, component of the cytochrome b6-f complex, which mediates electron transfer between photosystem II (PSII) and photosystem I (PSI), cyclic electron flow around PSI, and state transitions. PetL is important for photoautotrophic growth as well as for electron transfer efficiency and stability of the cytochrome b6-f complex. In Pinus thunbergii (Japanese black pine), this protein is Cytochrome b6-f complex subunit 6.